We begin with the raw amino-acid sequence, 385 residues long: Beta-lactamase (385 aa).

Positions 1-20 (MKRLLAFCLLFFAALGQAKV) are cleaved as a signal peptide. The active-site Acyl-ester intermediate is the S84. Catalysis depends on Y170, which acts as the Proton acceptor. 335–337 (KTG) contacts substrate.

The protein belongs to the class-C beta-lactamase family.

The protein localises to the periplasm. The enzyme catalyses a beta-lactam + H2O = a substituted beta-amino acid. Functionally, this protein is a serine beta-lactamase with a substrate specificity for cephalosporins. This Lysobacter lactamgenus protein is Beta-lactamase.